The primary structure comprises 672 residues: Peptidoglycan D,D-transpeptidase MrdA (672 aa).

A helical membrane pass occupies residues 21 to 41; it reads IFFAVGLVIICLLVLASRYAY. Serine 326 (acyl-ester intermediate) is an active-site residue. Positions 350, 365, 371, and 384 each coordinate Zn(2+). The tract at residues 616–672 is disordered; the sequence is ANHQVNGGLMTAGIKPGELPSGNESASSTPATSAPTSAAASTPQATPTRPATNEVDE. A compositionally biased stretch (low complexity) spans 640-672; it reads SASSTPATSAPTSAAASTPQATPTRPATNEVDE.

This sequence belongs to the transpeptidase family. MrdA subfamily. As to quaternary structure, monomer. Zn(2+) serves as cofactor.

It localises to the cell inner membrane. The catalysed reaction is Preferential cleavage: (Ac)2-L-Lys-D-Ala-|-D-Ala. Also transpeptidation of peptidyl-alanyl moieties that are N-acyl substituents of D-alanine.. The protein operates within cell wall biogenesis; peptidoglycan biosynthesis. With respect to regulation, inhibited by the beta-lactams sulbactam and piperacillin-tazobactam. Catalyzes cross-linking of the peptidoglycan cell wall. Involved in the determination of the rod shape of the cell. The chain is Peptidoglycan D,D-transpeptidase MrdA from Acinetobacter baumannii (strain ATCC 19606 / DSM 30007 / JCM 6841 / CCUG 19606 / CIP 70.34 / NBRC 109757 / NCIMB 12457 / NCTC 12156 / 81).